We begin with the raw amino-acid sequence, 203 residues long: Orotate phosphoribosyltransferase (203 aa).

5-phospho-alpha-D-ribose 1-diphosphate is bound by residues arginine 94, lysine 98, histidine 100, and 120 to 128 (EDLISTGGS). Position 124 (serine 124) interacts with orotate.

Belongs to the purine/pyrimidine phosphoribosyltransferase family. PyrE subfamily. In terms of assembly, homodimer. The cofactor is Mg(2+).

The enzyme catalyses orotidine 5'-phosphate + diphosphate = orotate + 5-phospho-alpha-D-ribose 1-diphosphate. It functions in the pathway pyrimidine metabolism; UMP biosynthesis via de novo pathway; UMP from orotate: step 1/2. Its function is as follows. Catalyzes the transfer of a ribosyl phosphate group from 5-phosphoribose 1-diphosphate to orotate, leading to the formation of orotidine monophosphate (OMP). In Staphylococcus aureus (strain COL), this protein is Orotate phosphoribosyltransferase.